Consider the following 215-residue polypeptide: MLDREGFRPNVGIILLNARNEVFWGKRLREHSWQFPQGGIKYGETPMQAMYRELHEETGLHPEHVKIIGRTRDWLRYEVPDKFIKREVRGHYRGQKQIWFLLRMVGRDCDICLRATDHPEFDAWRWNEYWVPLDAVIEFKRDVYQLALTELSRFLRRPAQRAEKPRGPRLSRYPRVIGVQAQQTLTIVDTSVVCSEIEVEASTLDEMPPHVIVGK.

The 144-residue stretch at 6 to 149 folds into the Nudix hydrolase domain; sequence GFRPNVGIIL…KRDVYQLALT (144 aa). The short motif at 38–59 is the Nudix box element; sequence GGIKYGETPMQAMYRELHEETG.

The protein belongs to the Nudix hydrolase family. RppH subfamily. A divalent metal cation is required as a cofactor.

Functionally, accelerates the degradation of transcripts by removing pyrophosphate from the 5'-end of triphosphorylated RNA, leading to a more labile monophosphorylated state that can stimulate subsequent ribonuclease cleavage. The polypeptide is RNA pyrophosphohydrolase (Burkholderia lata (strain ATCC 17760 / DSM 23089 / LMG 22485 / NCIMB 9086 / R18194 / 383)).